The primary structure comprises 263 residues: Kallikrein 1-related peptidase b24 (263 aa).

The N-terminal stretch at Met-1 to Ala-17 is a signal peptide. A propeptide spans Ala-18–Arg-24 (activation peptide). The region spanning Val-25–Ala-260 is the Peptidase S1 domain. 5 disulfides stabilise this stretch: Cys-31–Cys-175, Cys-50–Cys-66, Cys-154–Cys-221, Cys-186–Cys-200, and Cys-211–Cys-236. His-65 functions as the Charge relay system in the catalytic mechanism. Asn-69 and Asn-105 each carry an N-linked (GlcNAc...) asparagine glycan. Asp-122 functions as the Charge relay system in the catalytic mechanism. N-linked (GlcNAc...) asparagine glycosylation occurs at Asn-185. Ser-215 serves as the catalytic Charge relay system.

It belongs to the peptidase S1 family. Kallikrein subfamily.

It carries out the reaction Preferential cleavage of Arg-|-Xaa bonds in small molecule substrates. Highly selective action to release kallidin (lysyl-bradykinin) from kininogen involves hydrolysis of Met-|-Xaa or Leu-|-Xaa.. Functionally, glandular kallikreins cleave Met-Lys and Arg-Ser bonds in kininogen to release Lys-bradykinin. The sequence is that of Kallikrein 1-related peptidase b24 (Klk1b24) from Mus musculus (Mouse).